The sequence spans 53 residues: Large ribosomal subunit protein eL24 (53 aa).

The Zn(2+) site is built by cysteine 4, cysteine 7, cysteine 30, and cysteine 34. A C4-type zinc finger spans residues cysteine 4–cysteine 34.

This sequence belongs to the eukaryotic ribosomal protein eL24 family. As to quaternary structure, part of the 50S ribosomal subunit. Forms a cluster with proteins L3 and L14. Zn(2+) is required as a cofactor.

Functionally, binds to the 23S rRNA. In Methanobrevibacter smithii (strain ATCC 35061 / DSM 861 / OCM 144 / PS), this protein is Large ribosomal subunit protein eL24.